We begin with the raw amino-acid sequence, 500 residues long: Pyruvate kinase 1 (500 aa).

The residue at position 2 (S2) is an N-acetylserine. Residues S9 and S16 each carry the phosphoserine modification. Position 31 is a phosphothreonine (T31). Residue R49 participates in substrate binding. N51 and S53 together coordinate K(+). ATP is bound at residue 51–54 (NFSH). Residue S70 is modified to Phosphoserine. The K(+) site is built by D84 and T85. R91 provides a ligand contact to ATP. Residues K119, K124, K161, K164, and K166 each participate in a glycyl lysine isopeptide (Lys-Gly) (interchain with G-Cter in URM1) cross-link. Residue K177 participates in ATP binding. A Phosphothreonine modification is found at T184. K204 is covalently cross-linked (Glycyl lysine isopeptide (Lys-Gly) (interchain with G-Cter in ubiquitin)). S213 carries the phosphoserine modification. K240 contacts substrate. Mn(2+) is bound at residue E242. Residue K255 forms a Glycyl lysine isopeptide (Lys-Gly) (interchain with G-Cter in ubiquitin) linkage. 2 residues coordinate substrate: G265 and D266. D266 serves as a coordination point for Mn(2+). Residue K292 forms a Glycyl lysine isopeptide (Lys-Gly) (interchain with G-Cter in URM1) linkage. T298 is a binding site for substrate. The residue at position 316 (S316) is a Phosphoserine. K394 participates in a covalent cross-link: Glycyl lysine isopeptide (Lys-Gly) (interchain with G-Cter in URM1). 402-407 (STSGTT) contributes to the beta-D-fructose 1,6-bisphosphate binding site. Cysteine persulfide is present on C418. A Glycyl lysine isopeptide (Lys-Gly) (interchain with G-Cter in ubiquitin); alternate cross-link involves residue K446. K446 participates in a covalent cross-link: Glycyl lysine isopeptide (Lys-Gly) (interchain with G-Cter in URM1); alternate. Phosphoserine is present on S450. Residues W452 and R459 each coordinate beta-D-fructose 1,6-bisphosphate. T478 is modified (phosphothreonine). G484 provides a ligand contact to beta-D-fructose 1,6-bisphosphate.

Belongs to the pyruvate kinase family. Homotetramer. Requires Mg(2+) as cofactor. K(+) serves as cofactor. Conjugated to URM1, a ubiquitin-like protein, in response to oxidative stresses. The attachment of URM1 to lysine residues exclusively depends on the presence of a peroxidatic cysteine in the target protein, with low specificity for the particular residue, motif, or structural context at which urmylation can occur. The URM1-conjugation reaction is mechanistically and directly coupled to the process of cysteine persulfidation, transfering the sulfur atom of the URM1 thiocarboxyl group to redox-active cysteine residues in the target protein if it is exposed to oxidative conditions. Post-translationally, persulfidated on specific redox-active cysteine residues. Persulfidation (also called protein S-sulfhydration) may provide a molecular mechanism that enables cells to protect vulnerable cysteine residues from reactive oxygen species (ROS) under stress conditions.

The catalysed reaction is pyruvate + ATP = phosphoenolpyruvate + ADP + H(+). It functions in the pathway carbohydrate degradation; glycolysis; pyruvate from D-glyceraldehyde 3-phosphate: step 5/5. With respect to regulation, the activity is regulated by glucose levels. Activated by fructose-1,6-bisphosphate. The chain is Pyruvate kinase 1 (CDC19) from Saccharomyces cerevisiae (strain ATCC 204508 / S288c) (Baker's yeast).